A 220-amino-acid polypeptide reads, in one-letter code: NADH-quinone oxidoreductase subunit I (220 aa).

4Fe-4S ferredoxin-type domains lie at 71–102 and 112–141; these read LQRL…IITH and DSYT…MGNR. 8 residues coordinate [4Fe-4S] cluster: Cys82, Cys85, Cys88, Cys92, Cys121, Cys124, Cys127, and Cys131. Positions 189–220 are disordered; sequence ATPLDYVQEPSKEESKKETPTSPEANKGDENV. A compositionally biased stretch (basic and acidic residues) spans 198-207; sequence PSKEESKKET.

The protein belongs to the complex I 23 kDa subunit family. In terms of assembly, NDH-1 is composed of 14 different subunits. Subunits NuoA, H, J, K, L, M, N constitute the membrane sector of the complex. Requires [4Fe-4S] cluster as cofactor.

The protein localises to the cell inner membrane. The enzyme catalyses a quinone + NADH + 5 H(+)(in) = a quinol + NAD(+) + 4 H(+)(out). Functionally, NDH-1 shuttles electrons from NADH, via FMN and iron-sulfur (Fe-S) centers, to quinones in the respiratory chain. The immediate electron acceptor for the enzyme in this species is believed to be ubiquinone. Couples the redox reaction to proton translocation (for every two electrons transferred, four hydrogen ions are translocated across the cytoplasmic membrane), and thus conserves the redox energy in a proton gradient. This Helicobacter acinonychis (strain Sheeba) protein is NADH-quinone oxidoreductase subunit I.